A 130-amino-acid polypeptide reads, in one-letter code: Small ribosomal subunit protein uS11 (130 aa).

Belongs to the universal ribosomal protein uS11 family. Part of the 30S ribosomal subunit. Interacts with proteins S7 and S18. Binds to IF-3.

Functionally, located on the platform of the 30S subunit, it bridges several disparate RNA helices of the 16S rRNA. Forms part of the Shine-Dalgarno cleft in the 70S ribosome. The polypeptide is Small ribosomal subunit protein uS11 (Prochlorococcus marinus (strain NATL1A)).